Consider the following 20-residue polypeptide: 23 kDa cell wall protein (20 aa).

It is found in the secreted. The protein localises to the cell wall. The sequence is that of 23 kDa cell wall protein from Arabidopsis thaliana (Mouse-ear cress).